Reading from the N-terminus, the 128-residue chain is Transcription antitermination protein NusB (128 aa).

Belongs to the NusB family.

In terms of biological role, involved in transcription antitermination. Required for transcription of ribosomal RNA (rRNA) genes. Binds specifically to the boxA antiterminator sequence of the ribosomal RNA (rrn) operons. The sequence is that of Transcription antitermination protein NusB from Listeria monocytogenes serotype 4a (strain HCC23).